The chain runs to 366 residues: NAD(P)H-quinone oxidoreductase subunit 1, chloroplastic (366 aa).

8 helical membrane-spanning segments follow: residues 29 to 49, 97 to 117, 130 to 150, 166 to 186, 202 to 222, 254 to 274, 307 to 327, and 340 to 360; these read WITA…LVIV, LLFS…YLVI, IGVF…FMAG, VAQA…ISLL, FGFW…FLIA, FGLF…FVTV, VIIG…ISIV, and LLNL…LLTA.

Belongs to the complex I subunit 1 family. As to quaternary structure, NDH is composed of at least 16 different subunits, 5 of which are encoded in the nucleus.

It is found in the plastid. The protein resides in the chloroplast thylakoid membrane. The catalysed reaction is a plastoquinone + NADH + (n+1) H(+)(in) = a plastoquinol + NAD(+) + n H(+)(out). It carries out the reaction a plastoquinone + NADPH + (n+1) H(+)(in) = a plastoquinol + NADP(+) + n H(+)(out). In terms of biological role, NDH shuttles electrons from NAD(P)H:plastoquinone, via FMN and iron-sulfur (Fe-S) centers, to quinones in the photosynthetic chain and possibly in a chloroplast respiratory chain. The immediate electron acceptor for the enzyme in this species is believed to be plastoquinone. Couples the redox reaction to proton translocation, and thus conserves the redox energy in a proton gradient. This Anthoceros angustus (Hornwort) protein is NAD(P)H-quinone oxidoreductase subunit 1, chloroplastic.